The primary structure comprises 316 residues: Probable cell division protein WhiA (316 aa).

The H-T-H motif DNA-binding region spans 275-309; sequence TLKELGEMVSGGKISKSGINHRLRKIDEIAEKLRA.

The protein belongs to the WhiA family.

Functionally, involved in cell division and chromosome segregation. This chain is Probable cell division protein WhiA, found in Bacillus mycoides (strain KBAB4) (Bacillus weihenstephanensis).